The chain runs to 317 residues: Melanocyte-stimulating hormone receptor (317 aa).

At 1 to 37 (MPVLGSQRRLLGSLNCTPPATFPLMLAPNRTGPQCLE) the chain is on the extracellular side. An N-linked (GlcNAc...) asparagine glycan is attached at asparagine 29. A helical transmembrane segment spans residues 38-63 (VSIPNGLFLSLGLVSLVENVLVVAAI). The Cytoplasmic portion of the chain corresponds to 64-72 (AKNSNLHSP). The chain crosses the membrane as a helical span at residues 73 to 93 (MYYFICCLAVSDLLVSVSNVL). The Extracellular portion of the chain corresponds to 94-118 (ETAVMLLLEAGALAARAAVVQQLDN). The chain crosses the membrane as a helical span at residues 119–140 (VIDVLICGSMVSSLCFLGAIAV). The Cytoplasmic portion of the chain corresponds to 141–163 (DRYISIFYALRYHSVVTLPRAWR). The chain crosses the membrane as a helical span at residues 164-183 (IIAAIWVASILTSLLFITYY). Topologically, residues 184–191 (NHTVVLLC) are extracellular. Residues 192-211 (LVGFFIAMLALMAVLYVHML) traverse the membrane as a helical segment. The Cytoplasmic portion of the chain corresponds to 212–240 (ARACQHARGIARLQKRQRPIHRGFGLKGA). A helical membrane pass occupies residues 241–266 (ATLTILLGVFFLCWGPFFLHLSLIVL). Topologically, residues 267–279 (CPQHPTCGCIFKN) are extracellular. A helical transmembrane segment spans residues 280 to 300 (FNLFLALIICNAIVDPLIYAF). The Cytoplasmic segment spans residues 301-317 (RSQELRKTLQEVLQCSW). Cysteine 315 is lipidated: S-palmitoyl cysteine.

This sequence belongs to the G-protein coupled receptor 1 family. In terms of assembly, interacts with MGRN1, but does not undergo MGRN1-mediated ubiquitination; this interaction competes with GNAS-binding and thus inhibits agonist-induced cAMP production. Interacts with OPN3; the interaction results in a decrease in MC1R-mediated cAMP signaling and ultimately a decrease in melanin production in melanocytes.

Its subcellular location is the cell membrane. In terms of biological role, receptor for MSH (alpha, beta and gamma) and ACTH. The activity of this receptor is mediated by G proteins which activate adenylate cyclase. Mediates melanogenesis, the production of eumelanin (black/brown) and phaeomelanin (red/yellow), via regulation of cAMP signaling in melanocytes. This chain is Melanocyte-stimulating hormone receptor (MC1R), found in Rangifer tarandus (Reindeer).